A 70-amino-acid polypeptide reads, in one-letter code: Cuticle protein 16 isoform b (70 aa).

This is Cuticle protein 16 isoform b from Limulus polyphemus (Atlantic horseshoe crab).